The primary structure comprises 467 residues: UBX domain-containing protein 7 (467 aa).

A2 bears the N-acetylalanine mark. In terms of domain architecture, UBA spans A2–G54. The disordered stretch occupies residues E57–V77. A compositionally biased stretch (polar residues) spans P59–R70. Glycyl lysine isopeptide (Lys-Gly) (interchain with G-Cter in SUMO2) cross-links involve residues K84 and K112. Residues G240–I260 form a disordered region. Phosphoserine is present on residues S256, S258, S263, and S266. One copy of the ubiquitin-interacting motif (UIM) repeat lies at S263–D282. Residues F281 to S364 form a disordered region. A compositionally biased stretch (basic and acidic residues) spans H330–L344. S373 is subject to Phosphoserine. The region spanning V386 to V463 is the UBX domain.

In terms of assembly, interacts with neddylated CUL2, ubiquitinated HIF1A, and VCP/p97.

The protein resides in the nucleus. Its function is as follows. Ubiquitin-binding adapter that links a subset of NEDD8-associated cullin ring ligases (CRLs) to the segregase VCP/p97, to regulate turnover of their ubiquitination substrates. This Mus musculus (Mouse) protein is UBX domain-containing protein 7 (Ubxn7).